The following is a 72-amino-acid chain: uncharacterized protein (72 aa).

This is an uncharacterized protein from Rickettsia conorii (strain ATCC VR-613 / Malish 7).